Here is a 698-residue protein sequence, read N- to C-terminus: Elongation factor G 1 (698 aa).

The tr-type G domain maps to 8-290; it reads ERYRNIGIVA…AVVDFLPAPI (283 aa). GTP is bound by residues 17-24, 88-92, and 142-145; these read AHVDAGKT, DTPGH, and NKMD.

Belongs to the TRAFAC class translation factor GTPase superfamily. Classic translation factor GTPase family. EF-G/EF-2 subfamily.

The protein localises to the cytoplasm. In terms of biological role, catalyzes the GTP-dependent ribosomal translocation step during translation elongation. During this step, the ribosome changes from the pre-translocational (PRE) to the post-translocational (POST) state as the newly formed A-site-bound peptidyl-tRNA and P-site-bound deacylated tRNA move to the P and E sites, respectively. Catalyzes the coordinated movement of the two tRNA molecules, the mRNA and conformational changes in the ribosome. The chain is Elongation factor G 1 from Shewanella frigidimarina (strain NCIMB 400).